The chain runs to 178 residues: Large ribosomal subunit protein uL6 (178 aa).

This sequence belongs to the universal ribosomal protein uL6 family. Part of the 50S ribosomal subunit.

Its function is as follows. This protein binds to the 23S rRNA, and is important in its secondary structure. It is located near the subunit interface in the base of the L7/L12 stalk, and near the tRNA binding site of the peptidyltransferase center. This chain is Large ribosomal subunit protein uL6, found in Helicobacter pylori (strain J99 / ATCC 700824) (Campylobacter pylori J99).